The sequence spans 366 residues: Sodium-potassium/proton antiporter ChaA (366 aa).

At 1–16 the chain is on the cytoplasmic side; the sequence is MSNAQEAVKTRHKETS. 2 consecutive transmembrane segments (helical) span residues 17 to 37 and 38 to 58; these read LIFP…QTLP and VVIA…FSVV. Over 59 to 74 the chain is Cytoplasmic; that stretch reads RHADVLAHRLGEPYGS. The helical transmembrane segment at 75–95 threads the bilayer; it reads LILSLSVVILEVSLISALMAT. Over 96–106 the chain is Periplasmic; that stretch reads GDAAPTLMRDT. The helical transmembrane segment at 107-127 threads the bilayer; the sequence is LYSIIMIVTGGLVGFSLLLGG. The Cytoplasmic segment spans residues 128–143; that stretch reads RKFATQYMNLFGIKQY. The helical transmembrane segment at 144-164 threads the bilayer; it reads LIALFPLAIIVLVFPMALPAA. At 165-167 the chain is on the periplasmic side; that stretch reads NFS. The chain crosses the membrane as a helical span at residues 168 to 188; sequence TGQALLVALISAAMYGVFLLI. The Cytoplasmic segment spans residues 189 to 216; the sequence is QTKTHQSLFVYEHEDDSDDDDPHHGKPS. A helical transmembrane segment spans residues 217–237; it reads AHSSLWHAIWLIIHLIAVIAV. Residues 238-255 are Periplasmic-facing; sequence TKMNASSLETLLDSMNAP. A helical transmembrane segment spans residues 256-276; the sequence is VAFTGFLVALLILSPEGLGAL. At 277–290 the chain is on the cytoplasmic side; the sequence is KAVLNNQVQRAMNL. The chain crosses the membrane as a helical span at residues 291-311; that stretch reads FFGSVLATISLTVPVVTLIAF. The Periplasmic portion of the chain corresponds to 312–318; it reads MTGNELQ. A helical membrane pass occupies residues 319–339; the sequence is FALGAPEMVVMVASLVLCHIS. Over 340–345 the chain is Cytoplasmic; that stretch reads FSTGRT. Residues 346–366 form a helical membrane-spanning segment; it reads NVLNGAAHLALFAAYLMTIFA.

It belongs to the Ca(2+):cation antiporter (CaCA) (TC 2.A.19) family.

It is found in the cell inner membrane. It catalyses the reaction Na(+)(in) + H(+)(out) = Na(+)(out) + H(+)(in). The catalysed reaction is K(+)(in) + H(+)(out) = K(+)(out) + H(+)(in). The enzyme catalyses Ca(2+)(in) + H(+)(out) = Ca(2+)(out) + H(+)(in). With respect to regulation, pronounced pH dependence with sodium as substrate. Ca(2+)/H(+) and Na(+)/H(+) antiporter activities are both inhibited by magnesium. Ca(2+)/H(+) activity is inhibited by the proton ionophore carbonyl cyanide m-chlorophenylhydrazone (CCCP). Its function is as follows. Sodium exporter that functions mainly at alkaline pH. Can also function as a potassium/proton and calcium/proton antiporter at alkaline pH. Does not play a major role in calcium export. The K(+)/H(+) antiporter activity may enable E.coli to adapt to K(+) salinity stress and to maintain K(+) homeostasis. This Escherichia coli (strain K12) protein is Sodium-potassium/proton antiporter ChaA.